Here is a 283-residue protein sequence, read N- to C-terminus: Poly(3-hydroxyalkanoate) depolymerase (283 aa).

The AB hydrolase-1 domain occupies 30 to 253 (PLLIFNGIGA…IDDGHLFLIT (224 aa)). Ser-102 acts as the Charge relay system in catalysis.

The protein belongs to the AB hydrolase superfamily. Lipase family.

In terms of biological role, complements a mutant that does not degrade PHA; might be a lipase. The polypeptide is Poly(3-hydroxyalkanoate) depolymerase (Ectopseudomonas oleovorans (Pseudomonas oleovorans)).